The primary structure comprises 175 residues: NADH dehydrogenase [ubiquinone] 1 alpha subcomplex assembly factor 4 (175 aa).

The N-myristoyl glycine moiety is linked to residue Gly-2. Residue Ser-35 is modified to Phosphoserine.

It belongs to the NDUFAF4 family. As to quaternary structure, binds calmodulin. Interacts with NDUFAF3. In terms of assembly, (Microbial infection) Interacts with the vesicular stomatitis virus matrix protein/M; the interaction inhibits viral propagation. In terms of processing, phosphorylated on serine. Prolactin stimulate serine phosphorylation.

The protein resides in the mitochondrion. It localises to the membrane. Functionally, involved in the assembly of mitochondrial NADH:ubiquinone oxidoreductase complex (complex I). May be involved in cell proliferation and survival of hormone-dependent tumor cells. May be a regulator of breast tumor cell invasion. The polypeptide is NADH dehydrogenase [ubiquinone] 1 alpha subcomplex assembly factor 4 (Homo sapiens (Human)).